The primary structure comprises 420 residues: Argininosuccinate synthase (420 aa).

ATP is bound by residues 9–17 and alanine 35; that span reads AYSGGLDTS. Residues tyrosine 86 and serine 91 each contribute to the L-citrulline site. 114–122 serves as a coordination point for ATP; sequence SHGCTGKGN. The L-aspartate site is built by threonine 118, asparagine 122, and aspartate 123. Position 122 (asparagine 122) interacts with L-citrulline. L-citrulline is bound by residues arginine 126, serine 179, serine 188, glutamate 273, and tyrosine 285.

It belongs to the argininosuccinate synthase family. Type 1 subfamily. Homotetramer.

Its subcellular location is the cytoplasm. The catalysed reaction is L-citrulline + L-aspartate + ATP = 2-(N(omega)-L-arginino)succinate + AMP + diphosphate + H(+). It participates in amino-acid biosynthesis; L-arginine biosynthesis; L-arginine from L-ornithine and carbamoyl phosphate: step 2/3. Its function is as follows. Catalyzes the eighth step in arginine biosynthesis. Also has a catabolic function as the first enzyme of citrulline utilization as nitrogen source via arginine and the reactions involved in the arginase pathway. This is Argininosuccinate synthase (ARG1) from Saccharomyces cerevisiae (strain ATCC 204508 / S288c) (Baker's yeast).